The chain runs to 263 residues: Hydroxyethylthiazole kinase (263 aa).

Met-39 contributes to the substrate binding site. ATP-binding residues include Lys-115 and Thr-160. Position 187 (Gly-187) interacts with substrate.

Belongs to the Thz kinase family. It depends on Mg(2+) as a cofactor.

The catalysed reaction is 5-(2-hydroxyethyl)-4-methylthiazole + ATP = 4-methyl-5-(2-phosphooxyethyl)-thiazole + ADP + H(+). It functions in the pathway cofactor biosynthesis; thiamine diphosphate biosynthesis; 4-methyl-5-(2-phosphoethyl)-thiazole from 5-(2-hydroxyethyl)-4-methylthiazole: step 1/1. Catalyzes the phosphorylation of the hydroxyl group of 4-methyl-5-beta-hydroxyethylthiazole (THZ). The chain is Hydroxyethylthiazole kinase from Staphylococcus haemolyticus (strain JCSC1435).